A 257-amino-acid polypeptide reads, in one-letter code: Zinc import ATP-binding protein ZnuC (257 aa).

One can recognise an ABC transporter domain in the interval 6–221; the sequence is IRLDQVGVTF…PAFVELFGKT (216 aa). 38 to 45 serves as a coordination point for ATP; that stretch reads GPNGAGKT.

The protein belongs to the ABC transporter superfamily. Zinc importer (TC 3.A.1.15.5) family. As to quaternary structure, the complex is composed of two ATP-binding proteins (ZnuC), two transmembrane proteins (ZnuB) and a solute-binding protein (ZnuA).

Its subcellular location is the cell inner membrane. The catalysed reaction is Zn(2+)(out) + ATP(in) + H2O(in) = Zn(2+)(in) + ADP(in) + phosphate(in) + H(+)(in). Functionally, part of the ABC transporter complex ZnuABC involved in zinc import. Responsible for energy coupling to the transport system. In Pseudomonas putida (strain ATCC 47054 / DSM 6125 / CFBP 8728 / NCIMB 11950 / KT2440), this protein is Zinc import ATP-binding protein ZnuC.